The primary structure comprises 341 residues: Glyceraldehyde-3-phosphate dehydrogenase (341 aa).

NAD(+) contacts are provided by residues 11–12 (TI) and glycine 109. Residue 138–140 (SCN) participates in D-glyceraldehyde 3-phosphate binding. Cysteine 139 acts as the Nucleophile in catalysis. Arginine 167 contacts NAD(+). Residues threonine 169 and 192–193 (HA) each bind D-glyceraldehyde 3-phosphate. Position 299 (glutamine 299) interacts with NAD(+).

The protein belongs to the glyceraldehyde-3-phosphate dehydrogenase family. In terms of assembly, homotetramer.

Its subcellular location is the cytoplasm. The catalysed reaction is D-glyceraldehyde 3-phosphate + phosphate + NADP(+) = (2R)-3-phospho-glyceroyl phosphate + NADPH + H(+). It catalyses the reaction D-glyceraldehyde 3-phosphate + phosphate + NAD(+) = (2R)-3-phospho-glyceroyl phosphate + NADH + H(+). It participates in carbohydrate degradation; glycolysis; pyruvate from D-glyceraldehyde 3-phosphate: step 1/5. In Picrophilus torridus (strain ATCC 700027 / DSM 9790 / JCM 10055 / NBRC 100828 / KAW 2/3), this protein is Glyceraldehyde-3-phosphate dehydrogenase.